Reading from the N-terminus, the 100-residue chain is Small ribosomal subunit protein uS14c (100 aa).

This sequence belongs to the universal ribosomal protein uS14 family. In terms of assembly, part of the 30S ribosomal subunit.

It localises to the plastid. It is found in the chloroplast. Functionally, binds 16S rRNA, required for the assembly of 30S particles. The sequence is that of Small ribosomal subunit protein uS14c from Rhodomonas salina (Cryptomonas salina).